Reading from the N-terminus, the 103-residue chain is Histone H4 (103 aa).

Gly residues predominate over residues 1 to 14 (MSGRGKGGKGLGKG). The segment at 1 to 20 (MSGRGKGGKGLGKGGAKRHR) is disordered. Residues 17–21 (KRHRK) mediate DNA binding.

Belongs to the histone H4 family. In terms of assembly, the nucleosome is a histone octamer containing two molecules each of H2A, H2B, H3 and H4 assembled in one H3-H4 heterotetramer and two H2A-H2B heterodimers. The octamer wraps approximately 147 bp of DNA.

The protein localises to the nucleus. It localises to the chromosome. Functionally, core component of nucleosome. Nucleosomes wrap and compact DNA into chromatin, limiting DNA accessibility to the cellular machineries which require DNA as a template. Histones thereby play a central role in transcription regulation, DNA repair, DNA replication and chromosomal stability. DNA accessibility is regulated via a complex set of post-translational modifications of histones, also called histone code, and nucleosome remodeling. In Eimeria tenella (Coccidian parasite), this protein is Histone H4.